The chain runs to 474 residues: PTS system MurNAc-GlcNAc-specific EIIBC component (474 aa).

The region spanning 5-87 is the PTS EIIB type-1 domain; sequence ERLAKDITHA…ADQSGATLAE (83 aa). Cys-27 (phosphocysteine intermediate; for EIIB activity) is an active-site residue. A PTS EIIC type-1 domain is found at 124–474; that stretch reads KSIANIFIPL…GTTKEMRNPE (351 aa). Transmembrane regions (helical) follow at residues 129–149, 167–187, 193–213, 228–248, 268–288, 299–319, 343–363, 378–398, 402–422, and 444–464; these read IFIP…IAAI, IVTV…IFTG, VFGA…LTGI, LAAG…LSMV, ITLL…AGFV, IIGV…LPLV, LLPI…ALWV, ALPV…TLPL, FFTA…IGHI, and LGYI…TYFF.

It is found in the cell membrane. It carries out the reaction N-acetyl-beta-D-muramate-(1-&gt;4)-N-acetyl-D-glucosamine(out) + N(pros)-phospho-L-histidyl-[protein] = 6-phospho-N-acetyl-beta-D-muramate-(1-&gt;4)-N-acetyl-D-glucosamine(in) + L-histidyl-[protein]. The protein operates within cell wall biogenesis; peptidoglycan recycling. In terms of biological role, the phosphoenolpyruvate-dependent sugar phosphotransferase system (sugar PTS), a major carbohydrate active transport system, catalyzes the phosphorylation of incoming sugar substrates concomitantly with their translocation across the cell membrane. This system is involved in the uptake and phosphorylation of MurNAc-GlcNAc, the principle peptidoglycan turnover product of S.aureus, yielding cytoplasmic MurNAc 6P-GlcNAc. The protein is PTS system MurNAc-GlcNAc-specific EIIBC component of Staphylococcus epidermidis (strain ATCC 35984 / DSM 28319 / BCRC 17069 / CCUG 31568 / BM 3577 / RP62A).